Here is a 712-residue protein sequence, read N- to C-terminus: Translation initiation factor eIF2B subunit epsilon (712 aa).

The disordered stretch occupies residues 1 to 20 (MAGKKGQKKSGLGNHGKNSD). Ser-478, Ser-481, Ser-507, Ser-525, Ser-538, and Ser-707 each carry phosphoserine. The W2 domain maps to 539–710 (EFEDEDFEKE…QNADEESSSE (172 aa)).

Belongs to the eIF-2B gamma/epsilon subunits family. As to quaternary structure, component of the translation initiation factor 2B (eIF2B) complex which is a heterodecamer of two sets of five different subunits: alpha, beta, gamma, delta and epsilon. Subunits alpha, beta and delta comprise a regulatory subcomplex and subunits epsilon and gamma comprise a catalytic subcomplex. Within the complex, the hexameric regulatory complex resides at the center, with the two heterodimeric catalytic subcomplexes bound on opposite sides.

It is found in the cytoplasm. The protein resides in the cytosol. Functionally, acts as a catalytic component of the translation initiation factor 2B (eIF2B) complex, which catalyzes the exchange of GDP for GTP on eukaryotic initiation factor 2 (eIF2) and is regulated by phosphorylated eIF2. Its guanine nucleotide exchange factor activity is repressed when bound to eIF2 complex phosphorylated on the alpha subunit, thereby limiting the amount of methionyl-initiator methionine tRNA available to the ribosome and consequently global translation is repressed. It activates the synthesis of GCN4 in yeast under amino acid starvation conditions by suppressing the inhibitory effects of multiple AUG codons present in the leader of GCN4 mRNA. It may promote either repression or activation of GCN4 expression depending on amino acid availability. GCD6 and GCD7 repress GCN4 expression at the translational level by ensuring that ribosomes which have translated UORF1 will reinitiate at UORF2, -3, or -4 and thus fail to reach the GCN4 start site. The sequence is that of Translation initiation factor eIF2B subunit epsilon (GCD6) from Saccharomyces cerevisiae (strain ATCC 204508 / S288c) (Baker's yeast).